Here is a 157-residue protein sequence, read N- to C-terminus: Glycine-rich RNA-binding protein (157 aa).

Positions 6 to 84 constitute an RRM domain; that stretch reads YRCFVGGLAW…RNITVNEAQS (79 aa). The tract at residues 70 to 157 is disordered; sequence QELDGRNITV…YGGGGGGSRW (88 aa). Composition is skewed to gly residues over residues 86 to 138 and 145 to 157; these read GSGG…GGYG and DGGYGGGGGGSRW.

In terms of biological role, may play a role in the biosynthesis and processing of heterogeneous nuclear RNA and in the maturation of specific mRNAs in response to wounding. This is Glycine-rich RNA-binding protein from Daucus carota (Wild carrot).